Here is a 502-residue protein sequence, read N- to C-terminus: Capsid protein (502 aa).

2 disordered regions span residues 369–392 (ISEL…SDYD) and 405–487 (LTDS…TRKQ). Residues 447 to 456 (SRRRKRRRRS) show a composition bias toward basic residues.

The protein belongs to the anelloviridae capsid protein family.

It is found in the virion. Its function is as follows. Self-assembles to form an icosahedral capsid with a T=1 symmetry, about 30 nm in diameter, and consisting of 60 capsid proteins. The capsid encapsulates the genomic DNA. Capsid protein is involved in attachment and entry into the host cell. The sequence is that of Capsid protein from Tupaia.